Here is a 221-residue protein sequence, read N- to C-terminus: Phosphoribosylformylglycinamidine synthase subunit PurQ (221 aa).

A Glutamine amidotransferase type-1 domain is found at N2–A221. The Nucleophile role is filled by C86. Active-site residues include H194 and E196.

Part of the FGAM synthase complex composed of 1 PurL, 1 PurQ and 2 PurS subunits.

The protein localises to the cytoplasm. The catalysed reaction is N(2)-formyl-N(1)-(5-phospho-beta-D-ribosyl)glycinamide + L-glutamine + ATP + H2O = 2-formamido-N(1)-(5-O-phospho-beta-D-ribosyl)acetamidine + L-glutamate + ADP + phosphate + H(+). It catalyses the reaction L-glutamine + H2O = L-glutamate + NH4(+). The protein operates within purine metabolism; IMP biosynthesis via de novo pathway; 5-amino-1-(5-phospho-D-ribosyl)imidazole from N(2)-formyl-N(1)-(5-phospho-D-ribosyl)glycinamide: step 1/2. In terms of biological role, part of the phosphoribosylformylglycinamidine synthase complex involved in the purines biosynthetic pathway. Catalyzes the ATP-dependent conversion of formylglycinamide ribonucleotide (FGAR) and glutamine to yield formylglycinamidine ribonucleotide (FGAM) and glutamate. The FGAM synthase complex is composed of three subunits. PurQ produces an ammonia molecule by converting glutamine to glutamate. PurL transfers the ammonia molecule to FGAR to form FGAM in an ATP-dependent manner. PurS interacts with PurQ and PurL and is thought to assist in the transfer of the ammonia molecule from PurQ to PurL. This chain is Phosphoribosylformylglycinamidine synthase subunit PurQ, found in Synechococcus sp. (strain ATCC 27144 / PCC 6301 / SAUG 1402/1) (Anacystis nidulans).